The sequence spans 258 residues: Phosphoadenosine 5'-phosphosulfate reductase (258 aa).

Residue Cys244 is the Nucleophile; cysteine thiosulfonate intermediate of the active site.

It belongs to the PAPS reductase family. CysH subfamily.

Its subcellular location is the cytoplasm. The catalysed reaction is [thioredoxin]-disulfide + sulfite + adenosine 3',5'-bisphosphate + 2 H(+) = [thioredoxin]-dithiol + 3'-phosphoadenylyl sulfate. The protein operates within sulfur metabolism; hydrogen sulfide biosynthesis; sulfite from sulfate: step 3/3. Catalyzes the formation of sulfite from phosphoadenosine 5'-phosphosulfate (PAPS) using thioredoxin as an electron donor. This Vibrio atlanticus (strain LGP32) (Vibrio splendidus (strain Mel32)) protein is Phosphoadenosine 5'-phosphosulfate reductase.